Here is a 384-residue protein sequence, read N- to C-terminus: Sensor protein VanS (384 aa).

A run of 2 helical transmembrane segments spans residues 21–41 (MYIVAIVVVAIVFVLYIRSMI) and 76–96 (IDIFIYVAIVISILILCRVML). The 216-residue stretch at 161 to 376 (YLAHDIKTPL…TFRVELPAMP (216 aa)) folds into the Histidine kinase domain. His-164 carries the phosphohistidine; by autocatalysis modification. Positions 221–384 (QTITLTKTHI…MPDLVDKRRS (164 aa)) are involved in low-affinity ATP-binding. Exhibits higher affinity for ATP than GTP.

Autophosphorylated.

The protein localises to the membrane. The enzyme catalyses ATP + protein L-histidine = ADP + protein N-phospho-L-histidine.. Phosphorylation of VanR inhibited by EDTA. Functionally, member of the two-component regulatory system VanS/VanR. Functions as a sensor protein kinase which is autophosphorylated at a histidine residue in response to environmental stimuli, such as glycopeptide antibiotics. VanS transfers its phosphate group to transcriptional regulatory protein VanR, thereby modulating expression of target genes. Binds directly to, and autophosphorylation activity is enhanced by, the glycopeptides vancomycin and teicoplanin, in vitro. However it has also been reported that autophosphorylation, phosphate transfer to VanR and dephosphorylation of phospho-VanR are all unaffected by the presence of vancomycin, in vitro. In the absence of vancomycin, negatively regulates VanR-mediated activation of vanS, vanH, vanA and vanX, probably as a result of dephosphorylating phospho-VanR. May inhibit promoter-specific DNA binding by VanR. Involved in conferring vancomycin resistance. This chain is Sensor protein VanS, found in Enterococcus faecium (Streptococcus faecium).